The primary structure comprises 1023 residues: Peroxisome proliferator-activated receptor gamma coactivator 1-beta (1023 aa).

The segment at 1-91 (MAGNDCGALL…LFQIDSENEA (91 aa)) is abolishes DNA transcriptional activity when missing. The interval 122-148 (LSCTSASPAPSSAPPSPAPEKPSAPAP) is disordered. The segment covering 132-146 (SSAPPSPAPEKPSAP) has biased composition (pro residues). Positions 156–160 (LQKLL) match the LXXLL motif 1 motif. Disordered regions lie at residues 165–210 (YPTS…QSQS), 237–278 (LQSP…PGAP), and 302–331 (RKLPPQTPEPLPKACSNPSQQVRSRPWSRH). The LXXLL motif 2 motif lies at 343-347 (LRELL). Disordered regions lie at residues 369-463 (LTPR…LPWT), 520-567 (RELG…QLPP), 601-623 (TAGLTPPTTPPYKPTEEDPFKPD), and 636-683 (LPSP…GQKR). Ser-384 carries the post-translational modification Phosphoserine. The segment covering 412 to 422 (LRLEVKREVRR) has biased composition (basic and acidic residues). A compositionally biased stretch (acidic residues) spans 429–450 (QEEEDEEEEEEEEEEEKEEEEE). The residue at position 524 (Ser-524) is a Phosphoserine. The span at 614 to 623 (PTEEDPFKPD) shows a compositional bias: basic and acidic residues. Residue Ser-638 is modified to Phosphoserine. The HCFC1-binding-motif (HBM) signature appears at 691-694 (DHDY). 2 disordered regions span residues 717-758 (VHLE…LRDH) and 779-867 (DLAS…WSPA). The span at 793–805 (EDSSSSSGESSFL) shows a compositional bias: low complexity. The segment covering 806–825 (PEEEEEEGEEEEEDDEEEDS) has biased composition (acidic residues). Over residues 849–866 (CSRSRSSSGSSPCHSWSP) the composition is skewed to low complexity. Residues 902–976 (RVVYIQNLSS…RNEPSFQLSY (75 aa)) enclose the RRM domain.

Interacts with hepatocyte nuclear factor 4-alpha/HNF4A, Sterol regulatory binding transcription factor 1/SREBF1, PPAR-alpha/PPARA, thyroid hormone receptor beta/THRB and host cell factor/HCFC1. Interacts with estrogen-related receptor gamma/ESRRG and alpha/ESRRA. Interacts with PRDM16. Interacts with estrogen receptor alpha/ESR1. In terms of tissue distribution, ubiquitous with higher expression in heart, brain and skeletal muscle.

Its subcellular location is the nucleus. Plays a role of stimulator of transcription factors and nuclear receptors activities. Activates transcriptional activity of estrogen receptor alpha, nuclear respiratory factor 1 (NRF1) and glucocorticoid receptor in the presence of glucocorticoids. May play a role in constitutive non-adrenergic-mediated mitochondrial biogenesis as suggested by increased basal oxygen consumption and mitochondrial number when overexpressed. May be involved in fat oxidation and non-oxidative glucose metabolism and in the regulation of energy expenditure. Induces the expression of PERM1 in the skeletal muscle in an ESRRA-dependent manner. This chain is Peroxisome proliferator-activated receptor gamma coactivator 1-beta (PPARGC1B), found in Homo sapiens (Human).